A 212-amino-acid chain; its full sequence is Uracil phosphoribosyltransferase (212 aa).

Residues arginine 78, arginine 103, and 130 to 138 (DPMLATGGS) contribute to the 5-phospho-alpha-D-ribose 1-diphosphate site. Uracil is bound by residues isoleucine 193 and 198 to 200 (GDA). 5-phospho-alpha-D-ribose 1-diphosphate is bound at residue aspartate 199.

This sequence belongs to the UPRTase family. Requires Mg(2+) as cofactor.

The catalysed reaction is UMP + diphosphate = 5-phospho-alpha-D-ribose 1-diphosphate + uracil. The protein operates within pyrimidine metabolism; UMP biosynthesis via salvage pathway; UMP from uracil: step 1/1. Its activity is regulated as follows. Allosterically activated by GTP. Functionally, catalyzes the conversion of uracil and 5-phospho-alpha-D-ribose 1-diphosphate (PRPP) to UMP and diphosphate. The sequence is that of Uracil phosphoribosyltransferase from Bordetella avium (strain 197N).